The primary structure comprises 364 residues: Chorismate synthase (364 aa).

Positions 48 and 54 each coordinate NADP(+). FMN contacts are provided by residues 125–127 (RSS), 238–239 (NA), Gly278, 293–297 (KPTSS), and Arg319.

This sequence belongs to the chorismate synthase family. In terms of assembly, homotetramer. It depends on FMNH2 as a cofactor.

The enzyme catalyses 5-O-(1-carboxyvinyl)-3-phosphoshikimate = chorismate + phosphate. Its pathway is metabolic intermediate biosynthesis; chorismate biosynthesis; chorismate from D-erythrose 4-phosphate and phosphoenolpyruvate: step 7/7. In terms of biological role, catalyzes the anti-1,4-elimination of the C-3 phosphate and the C-6 proR hydrogen from 5-enolpyruvylshikimate-3-phosphate (EPSP) to yield chorismate, which is the branch point compound that serves as the starting substrate for the three terminal pathways of aromatic amino acid biosynthesis. This reaction introduces a second double bond into the aromatic ring system. The protein is Chorismate synthase of Shewanella frigidimarina (strain NCIMB 400).